Here is a 124-residue protein sequence, read N- to C-terminus: Photoactive yellow protein (124 aa).

Residues 22–85 (AEYLPFGAVL…GEFLRFHQTG (64 aa)) form the PAS domain. The residue at position 68 (cysteine 68) is an S-(4-hydroxycinnamyl)cysteine.

It belongs to the photoactive yellow protein family. The 4-hydroxycinnamic acid (p-coumaric acid) chromophore is covalently bound via a thioester linkage.

Functionally, this photoactive protein is a photoreceptor with kinetics similar to that of rhodopsin. The sequence is that of Photoactive yellow protein (pyp) from Cereibacter sphaeroides (strain ATCC 17023 / DSM 158 / JCM 6121 / CCUG 31486 / LMG 2827 / NBRC 12203 / NCIMB 8253 / ATH 2.4.1.) (Rhodobacter sphaeroides).